The following is a 124-amino-acid chain: Glutaredoxin-2 (124 aa).

A disulfide bridge links Cys13 with Cys16.

It belongs to the glutaredoxin family. In terms of assembly, homodimer.

It is found in the host cytoplasm. Functionally, glutaredoxin necessary for virion morphogenesis and virus replication. Functions as a thiol-disulfide transfer protein between membrane-associated OPG128 and substrates OPG095 or OPG053. The complete pathway for formation of disulfide bonds in intracellular virion membrane proteins sequentially involves oxidation of OPG072, OPG128 and OPG088. Exhibit thioltransferase and dehydroascorbate reductase activities in vitro. This Oryctolagus cuniculus (Rabbit) protein is Glutaredoxin-2 (OPG088).